Here is a 218-residue protein sequence, read N- to C-terminus: Peptide methionine sulfoxide reductase MsrA (218 aa).

The active site involves cysteine 54.

The protein belongs to the MsrA Met sulfoxide reductase family.

The catalysed reaction is L-methionyl-[protein] + [thioredoxin]-disulfide + H2O = L-methionyl-(S)-S-oxide-[protein] + [thioredoxin]-dithiol. It carries out the reaction [thioredoxin]-disulfide + L-methionine + H2O = L-methionine (S)-S-oxide + [thioredoxin]-dithiol. In terms of biological role, has an important function as a repair enzyme for proteins that have been inactivated by oxidation. Catalyzes the reversible oxidation-reduction of methionine sulfoxide in proteins to methionine. This is Peptide methionine sulfoxide reductase MsrA from Azorhizobium caulinodans (strain ATCC 43989 / DSM 5975 / JCM 20966 / LMG 6465 / NBRC 14845 / NCIMB 13405 / ORS 571).